A 392-amino-acid chain; its full sequence is Flagellar P-ring protein (392 aa).

The signal sequence occupies residues 1–38 (MKPFARRALLTAEPIRALLLAASLLAATLGLMPAEAFG).

It belongs to the FlgI family. As to quaternary structure, the basal body constitutes a major portion of the flagellar organelle and consists of four rings (L,P,S, and M) mounted on a central rod.

The protein localises to the periplasm. Its subcellular location is the bacterial flagellum basal body. Functionally, assembles around the rod to form the L-ring and probably protects the motor/basal body from shearing forces during rotation. In Paramagnetospirillum magneticum (strain ATCC 700264 / AMB-1) (Magnetospirillum magneticum), this protein is Flagellar P-ring protein.